The following is an 84-amino-acid chain: Small ribosomal subunit protein bS20 (84 aa).

The interval 1–28 (MPNIKSAIKRVKTADTRNSRNASQRSAM) is disordered.

Belongs to the bacterial ribosomal protein bS20 family.

Its function is as follows. Binds directly to 16S ribosomal RNA. In Listeria welshimeri serovar 6b (strain ATCC 35897 / DSM 20650 / CCUG 15529 / CIP 8149 / NCTC 11857 / SLCC 5334 / V8), this protein is Small ribosomal subunit protein bS20.